A 163-amino-acid polypeptide reads, in one-letter code: Large ribosomal subunit protein uL18 (163 aa).

It belongs to the universal ribosomal protein uL18 family. Part of the 50S ribosomal subunit. Contacts the 5S and 23S rRNAs.

In terms of biological role, this is one of the proteins that bind and probably mediate the attachment of the 5S RNA into the large ribosomal subunit, where it forms part of the central protuberance. In Thermoplasma acidophilum (strain ATCC 25905 / DSM 1728 / JCM 9062 / NBRC 15155 / AMRC-C165), this protein is Large ribosomal subunit protein uL18.